The following is a 207-amino-acid chain: Phenazine biosynthesis protein PhzD1 (207 aa).

D38 acts as the Proton donor in catalysis. Residues Q78, R87, K122, and 151-155 contribute to the substrate site; that span reads YAHVG.

It belongs to the isochorismatase family. In terms of assembly, homodimer.

It carries out the reaction (2S)-2-amino-4-deoxychorismate + H2O = (5S,6S)-6-amino-5-hydroxycyclohexa-1,3-diene-1-carboxyate + pyruvate. Its pathway is antibiotic biosynthesis; phenazine biosynthesis. In terms of biological role, involved in the biosynthesis of the antibiotic phenazine, a nitrogen-containing heterocyclic molecule. PhzD1 (operon phzA1B1C1E1F1G1) has a role in the biosynthesis of the phenazine during planktonic growth. Catalyzes the hydrolysis of the vinyl ether functional group of 2-amino-2-deoxyisochorismate (ADIC), yielding pyruvate and trans-2,3-dihydro-3-hydroxyanthranilic acid (DHHA). Also able to act on isochorismate, chorismate and 4-amino-4-deoxychorismate (ADC) as substrates. This is Phenazine biosynthesis protein PhzD1 from Pseudomonas aeruginosa (strain ATCC 15692 / DSM 22644 / CIP 104116 / JCM 14847 / LMG 12228 / 1C / PRS 101 / PAO1).